Reading from the N-terminus, the 627-residue chain is Glycerophosphodiester phosphodiesterase domain-containing protein 4 (627 aa).

The Cytoplasmic portion of the chain corresponds to 1–17 (MLLFLWIETSNEYFNFD). Residues 18–38 (WVIFLGTGYWFYWSIFILSLA) traverse the membrane as a helical segment. Position 39 (glycine 39) is a topological domain, extracellular. A helical membrane pass occupies residues 40-60 (ILTAYSSLLLLLGLLLLWEGI). Over 61-69 (ELYLHLCHK) the chain is Cytoplasmic. A helical transmembrane segment spans residues 70 to 90 (ILILLVILPCVILMFIICKFW). Residues 91-107 (KERWLVAGLSLQIFAPY) are Extracellular-facing. A helical membrane pass occupies residues 108–128 (VHLVSITVMVILFWPVAIYVA). Residues 129 to 162 (RLEREVRMRRYRMTHSEKKRLKKCNVIARLRGLQ) lie on the Cytoplasmic side of the membrane. A helical membrane pass occupies residues 163-183 (VAVGLPFLLIFLSLCLMPLGI). The Extracellular segment spans residues 184–468 (YSPCIQEKEN…PHFFMTPKFY (285 aa)). Positions 198 to 457 (PTLFGHRGAP…DNIGLLSQLN (260 aa)) constitute a GP-PDE domain. A divalent metal cation-binding residues include glutamate 230, aspartate 232, and histidine 245. N-linked (GlcNAc...) asparagine glycosylation is found at asparagine 308 and asparagine 397. A helical membrane pass occupies residues 469-489 (MFIWLLVDIISVLFIVAIFCF). Topologically, residues 490 to 627 (HWRRETIKEK…TMPSVEVPYP (138 aa)) are cytoplasmic.

Belongs to the glycerophosphoryl diester phosphodiesterase family.

The protein resides in the membrane. This is Glycerophosphodiester phosphodiesterase domain-containing protein 4 (GDPD4) from Macaca fascicularis (Crab-eating macaque).